The sequence spans 408 residues: Succinylornithine transaminase (408 aa).

K252 bears the N6-(pyridoxal phosphate)lysine mark.

It belongs to the class-III pyridoxal-phosphate-dependent aminotransferase family. AstC subfamily. It depends on pyridoxal 5'-phosphate as a cofactor.

It catalyses the reaction N(2)-succinyl-L-ornithine + 2-oxoglutarate = N-succinyl-L-glutamate 5-semialdehyde + L-glutamate. It functions in the pathway amino-acid degradation; L-arginine degradation via AST pathway; L-glutamate and succinate from L-arginine: step 3/5. Catalyzes the transamination of N(2)-succinylornithine and alpha-ketoglutarate into N(2)-succinylglutamate semialdehyde and glutamate. Can also act as an acetylornithine aminotransferase. In Salmonella typhi, this protein is Succinylornithine transaminase.